A 386-amino-acid chain; its full sequence is Mannitol-1-phosphate 5-dehydrogenase (386 aa).

A4–G15 lines the NAD(+) pocket.

Belongs to the mannitol dehydrogenase family.

The enzyme catalyses D-mannitol 1-phosphate + NAD(+) = beta-D-fructose 6-phosphate + NADH + H(+). The sequence is that of Mannitol-1-phosphate 5-dehydrogenase from Oceanobacillus iheyensis (strain DSM 14371 / CIP 107618 / JCM 11309 / KCTC 3954 / HTE831).